The chain runs to 377 residues: Nitric oxide reductase FlRd-NAD(+) reductase (377 aa).

The protein belongs to the FAD-dependent oxidoreductase family. The cofactor is FAD.

It is found in the cytoplasm. The enzyme catalyses 2 reduced [nitric oxide reductase rubredoxin domain] + NAD(+) + H(+) = 2 oxidized [nitric oxide reductase rubredoxin domain] + NADH. The protein operates within nitrogen metabolism; nitric oxide reduction. One of at least two accessory proteins for anaerobic nitric oxide (NO) reductase. Reduces the rubredoxin moiety of NO reductase. This is Nitric oxide reductase FlRd-NAD(+) reductase from Salmonella heidelberg (strain SL476).